The primary structure comprises 331 residues: tRNA (guanine-N(1)-)-methyltransferase (331 aa).

2 stretches are compositionally biased toward low complexity: residues 77–99 (GSDT…QATR) and 107–134 (AQPG…GRAA). A disordered region spans residues 77–137 (GSDTTARSGS…PGAGRAASSR (61 aa)). S-adenosyl-L-methionine contacts are provided by residues G169 and 193–198 (LGDYVL). The disordered stretch occupies residues 312–331 (WQRCSPAPSEQAPEGARDMA).

It belongs to the RNA methyltransferase TrmD family. As to quaternary structure, homodimer.

Its subcellular location is the cytoplasm. It catalyses the reaction guanosine(37) in tRNA + S-adenosyl-L-methionine = N(1)-methylguanosine(37) in tRNA + S-adenosyl-L-homocysteine + H(+). Specifically methylates guanosine-37 in various tRNAs. The protein is tRNA (guanine-N(1)-)-methyltransferase of Kocuria rhizophila (strain ATCC 9341 / DSM 348 / NBRC 103217 / DC2201).